The chain runs to 673 residues: Centrosomal protein kizuna (673 aa).

Disordered stretches follow at residues 175–207 (TEHK…TDSC), 255–413 (GSNT…ALKL), 432–480 (QTLS…NSVK), 494–516 (ECGR…ILND), and 613–673 (SEAS…DFYD). Composition is skewed to polar residues over residues 196 to 207 (QTAQSSNVTDSC) and 255 to 266 (GSNTRHGKSNLS). Basic and acidic residues-rich tracts occupy residues 267–293 (EGKK…DLKC) and 303–316 (ILTR…EKRA). Phosphoserine is present on residues Ser317 and Ser321. Positions 331–357 (SENKWSQEKHSPWEGVSDHLAHREPKS) are enriched in basic and acidic residues. Thr379 is subject to Phosphothreonine; by PLK1. Positions 471-480 (TLKEHDNSVK) are enriched in basic and acidic residues. Low complexity-rich tracts occupy residues 503–512 (SSESSCSLPS) and 613–625 (SEAS…GSPL). 3 positions are modified to phosphoserine: Ser647, Ser650, and Ser652.

This sequence belongs to the kizuna family. Interacts with AKAP9, CEP72, ODF2, PCNT and TUBGCP2. Post-translationally, phosphorylation at Thr-379 by PLK1 is not needed for centrosomal localization or pericentriolar material expansion but is indispensable for spindle-pole stabilization.

Its subcellular location is the cytoplasm. The protein resides in the cytoskeleton. It is found in the microtubule organizing center. It localises to the centrosome. The protein localises to the cilium basal body. Functionally, centrosomal protein required for establishing a robust mitotic centrosome architecture that can endure the forces that converge on the centrosomes during spindle formation. Required for stabilizing the expanded pericentriolar material around the centriole. The sequence is that of Centrosomal protein kizuna (KIZ) from Homo sapiens (Human).